A 399-amino-acid chain; its full sequence is S-adenosylmethionine synthase (399 aa).

ATP is bound at residue histidine 17. Aspartate 19 provides a ligand contact to Mg(2+). Position 45 (glutamate 45) interacts with K(+). The L-methionine site is built by glutamate 58 and glutamine 101. The flexible loop stretch occupies residues 101–111 (QSPDIAQGVDK). Residues 176 to 178 (DGK), 243 to 244 (RF), aspartate 252, 258 to 259 (RK), and lysine 279 contribute to the ATP site. Aspartate 252 is a binding site for L-methionine. Lysine 283 is an L-methionine binding site.

The protein belongs to the AdoMet synthase family. As to quaternary structure, homotetramer; dimer of dimers. Requires Mg(2+) as cofactor. K(+) serves as cofactor.

It localises to the cytoplasm. It catalyses the reaction L-methionine + ATP + H2O = S-adenosyl-L-methionine + phosphate + diphosphate. It participates in amino-acid biosynthesis; S-adenosyl-L-methionine biosynthesis; S-adenosyl-L-methionine from L-methionine: step 1/1. Functionally, catalyzes the formation of S-adenosylmethionine (AdoMet) from methionine and ATP. The overall synthetic reaction is composed of two sequential steps, AdoMet formation and the subsequent tripolyphosphate hydrolysis which occurs prior to release of AdoMet from the enzyme. This is S-adenosylmethionine synthase from Staphylococcus epidermidis (strain ATCC 35984 / DSM 28319 / BCRC 17069 / CCUG 31568 / BM 3577 / RP62A).